A 292-amino-acid chain; its full sequence is Malonyl-S-ACP:biotin-protein carboxyltransferase MADD (292 aa).

In terms of domain architecture, CoA carboxyltransferase C-terminal spans 1 to 281 (MEIMMGQGRL…RGKVMAMMDK (281 aa)).

The protein resides in the cytoplasm. The catalysed reaction is N(6)-biotinyl-L-lysyl-[protein] + malonyl-[ACP] = N(6)-carboxybiotinyl-L-lysyl-[protein] + acetyl-[ACP]. Gamma subunit of the biotin-dependent malonate decarboxylase multienzyme complex (EC 7.2.4.4). The two subunits MADC and MADD are required for the transfer of the malonate carboxy group from the acyl-carrier protein (ACP) to the prosthetic group of the biotin carrier MADF. Required for the regeneration of ACP. This Malonomonas rubra protein is Malonyl-S-ACP:biotin-protein carboxyltransferase MADD (madD).